Consider the following 236-residue polypeptide: Small ribosomal subunit protein eS6 (236 aa).

Phosphoserine is present on residues S232 and S233.

Belongs to the eukaryotic ribosomal protein eS6 family. In terms of processing, phosphorylated.

This is Small ribosomal subunit protein eS6 (RPS6) from Debaryomyces hansenii (strain ATCC 36239 / CBS 767 / BCRC 21394 / JCM 1990 / NBRC 0083 / IGC 2968) (Yeast).